A 600-amino-acid polypeptide reads, in one-letter code: Elongation factor 4 (600 aa).

Residues 5–187 (KYIRNFSIIA…AIVNKLPPPK (183 aa)) enclose the tr-type G domain. GTP-binding positions include 17–22 (DHGKST) and 134–137 (NKID).

The protein belongs to the TRAFAC class translation factor GTPase superfamily. Classic translation factor GTPase family. LepA subfamily.

It localises to the cell inner membrane. It catalyses the reaction GTP + H2O = GDP + phosphate + H(+). Required for accurate and efficient protein synthesis under certain stress conditions. May act as a fidelity factor of the translation reaction, by catalyzing a one-codon backward translocation of tRNAs on improperly translocated ribosomes. Back-translocation proceeds from a post-translocation (POST) complex to a pre-translocation (PRE) complex, thus giving elongation factor G a second chance to translocate the tRNAs correctly. Binds to ribosomes in a GTP-dependent manner. The sequence is that of Elongation factor 4 from Rickettsia felis (strain ATCC VR-1525 / URRWXCal2) (Rickettsia azadi).